The following is a 160-amino-acid chain: Transcriptional repressor NrdR (160 aa).

A zinc finger spans residues 3–34 (CPFCGHADTQVVDSRVSEEGDTIRRRRRCLSC). The region spanning 49-139 (PTVVKRDGSR…VYKSFEDIGE (91 aa)) is the ATP-cone domain.

It belongs to the NrdR family. The cofactor is Zn(2+).

Negatively regulates transcription of bacterial ribonucleotide reductase nrd genes and operons by binding to NrdR-boxes. This chain is Transcriptional repressor NrdR, found in Bordetella avium (strain 197N).